Here is a 278-residue protein sequence, read N- to C-terminus: Toxin coregulated pilus biosynthesis protein D (278 aa).

A helical membrane pass occupies residues Leu30–Tyr50.

The protein resides in the cell membrane. In terms of biological role, involved in TCP pilus biogenesis. The protein is Toxin coregulated pilus biosynthesis protein D (tcpD) of Vibrio cholerae serotype O1 (strain ATCC 39315 / El Tor Inaba N16961).